A 146-amino-acid chain; its full sequence is Interleukin-3 (146 aa).

The N-terminal stretch at 1-17 is a signal peptide; the sequence is MSSLSILHLLLLLLSLH. N65 carries an N-linked (GlcNAc...) asparagine glycan.

It belongs to the IL-3 family. As to quaternary structure, monomer. As to expression, activated T-cells, mast cells, natural killer cells.

The protein resides in the secreted. Functionally, granulocyte/macrophage colony-stimulating factors are cytokines that act in hematopoiesis by controlling the production, differentiation, and function of 2 related white cell populations of the blood, the granulocytes and the monocytes-macrophages. In terms of biological role, this CSF induces granulocytes, macrophages, mast cells, stem cells, erythroid cells, eosinophils and megakaryocytes. The polypeptide is Interleukin-3 (IL3) (Ovis aries (Sheep)).